A 309-amino-acid polypeptide reads, in one-letter code: Elongation factor Ts, mitochondrial (309 aa).

The protein belongs to the EF-Ts family.

It is found in the mitochondrion. In terms of biological role, associates with the EF-Tu.GDP complex and induces the exchange of GDP to GTP. It remains bound to the aminoacyl-tRNA.EF-Tu.GTP complex up to the GTP hydrolysis stage on the ribosome. The protein is Elongation factor Ts, mitochondrial (tsfm) of Salmo salar (Atlantic salmon).